A 380-amino-acid chain; its full sequence is Cytosolic acyl coenzyme A thioester hydrolase (380 aa).

Residues 50-168 (PCGACITGRI…TLWYVPLSLK (119 aa)) enclose the HotDog ACOT-type 1 domain. Asn66 is a catalytic residue. Residues Lys168 and Lys198 each carry the N6-acetyllysine modification. The region spanning 224-338 (SYSQSSLIHL…FFTYVSLSQE (115 aa)) is the HotDog ACOT-type 2 domain. Asp255 is a catalytic residue. Lys283 bears the N6-acetyllysine mark. Positions 350-380 (ETEDEKKRFEEGKGRYLQMKAKRQGHAEPQP) are disordered. Over residues 353–363 (DEKKRFEEGKG) the composition is skewed to basic and acidic residues.

In terms of assembly, homohexamer. In terms of tissue distribution, isoform 4 is expressed exclusively in brain.

It localises to the cytoplasm. It is found in the cytosol. The protein localises to the mitochondrion. It carries out the reaction hexadecanoyl-CoA + H2O = hexadecanoate + CoA + H(+). The enzyme catalyses octanoyl-CoA + H2O = octanoate + CoA + H(+). It catalyses the reaction dodecanoyl-CoA + H2O = dodecanoate + CoA + H(+). The catalysed reaction is (9Z)-octadecenoyl-CoA + H2O = (9Z)-octadecenoate + CoA + H(+). It carries out the reaction tetradecanoyl-CoA + H2O = tetradecanoate + CoA + H(+). The enzyme catalyses decanoyl-CoA + H2O = decanoate + CoA + H(+). It catalyses the reaction octadecanoyl-CoA + H2O = octadecanoate + CoA + H(+). Its pathway is lipid metabolism; fatty acid metabolism. In terms of biological role, catalyzes the hydrolysis of acyl-CoAs into free fatty acids and coenzyme A (CoASH), regulating their respective intracellular levels. Preferentially hydrolyzes palmitoyl-CoA, but has a broad specificity acting on other fatty acyl-CoAs with chain-lengths of C8-C18. May play an important physiological function in brain. The sequence is that of Cytosolic acyl coenzyme A thioester hydrolase (ACOT7) from Homo sapiens (Human).